The primary structure comprises 208 residues: Na(+)-translocating NADH-quinone reductase subunit D (208 aa).

A run of 5 helical transmembrane segments spans residues 42 to 62 (FVMAIAVTLVTGLSNLFVSLI), 72 to 92 (IIVQLAIIASLVIVVDQILKA), 103 to 123 (VFVGLIITNCIVMGRAEAFAM), 131 to 151 (FVDGIGNGLGYGSMLIIVAFF), and 178 to 198 (NGLFLLAPSAFFIIGFVIWGL).

The protein belongs to the NqrDE/RnfAE family. As to quaternary structure, composed of six subunits; NqrA, NqrB, NqrC, NqrD, NqrE and NqrF.

The protein resides in the cell inner membrane. It catalyses the reaction a ubiquinone + n Na(+)(in) + NADH + H(+) = a ubiquinol + n Na(+)(out) + NAD(+). Its function is as follows. NQR complex catalyzes the reduction of ubiquinone-1 to ubiquinol by two successive reactions, coupled with the transport of Na(+) ions from the cytoplasm to the periplasm. NqrA to NqrE are probably involved in the second step, the conversion of ubisemiquinone to ubiquinol. This chain is Na(+)-translocating NADH-quinone reductase subunit D, found in Haemophilus influenzae (strain 86-028NP).